Consider the following 100-residue polypeptide: Small ribosomal subunit protein uS14c (100 aa).

The protein belongs to the universal ribosomal protein uS14 family. In terms of assembly, part of the 30S ribosomal subunit.

The protein localises to the plastid. The protein resides in the chloroplast. In terms of biological role, binds 16S rRNA, required for the assembly of 30S particles. The chain is Small ribosomal subunit protein uS14c from Morus indica (Mulberry).